We begin with the raw amino-acid sequence, 250 residues long: Adenosylcobinamide-GDP ribazoletransferase (250 aa).

Helical transmembrane passes span 31-51 (ISYL…VYFV), 55-75 (FILG…ITGA), 106-126 (VGTN…AVLN), 133-153 (IIIA…LLMC), 187-207 (IGYV…VLFI), and 230-250 (NEIA…CGLL).

This sequence belongs to the CobS family. It depends on Mg(2+) as a cofactor.

The protein localises to the cell membrane. The enzyme catalyses alpha-ribazole + adenosylcob(III)inamide-GDP = adenosylcob(III)alamin + GMP + H(+). It catalyses the reaction alpha-ribazole 5'-phosphate + adenosylcob(III)inamide-GDP = adenosylcob(III)alamin 5'-phosphate + GMP + H(+). It participates in cofactor biosynthesis; adenosylcobalamin biosynthesis; adenosylcobalamin from cob(II)yrinate a,c-diamide: step 7/7. Functionally, joins adenosylcobinamide-GDP and alpha-ribazole to generate adenosylcobalamin (Ado-cobalamin). Also synthesizes adenosylcobalamin 5'-phosphate from adenosylcobinamide-GDP and alpha-ribazole 5'-phosphate. The polypeptide is Adenosylcobinamide-GDP ribazoletransferase (Clostridium novyi (strain NT)).